The sequence spans 340 residues: Large ribosomal subunit protein uL10 (340 aa).

Residues 305–340 (APQPAEEKVEEAEEEEEEEEEASEEEALAGLGALFG) are disordered. Positions 312–331 (KVEEAEEEEEEEEEASEEEA) are enriched in acidic residues.

The protein belongs to the universal ribosomal protein uL10 family. Part of the 50S ribosomal subunit. Forms part of the ribosomal stalk which helps the ribosome interact with GTP-bound translation factors. Forms a heptameric L10(L12)2(L12)2(L12)2 complex, where L10 forms an elongated spine to which the L12 dimers bind in a sequential fashion.

In terms of biological role, forms part of the ribosomal stalk, playing a central role in the interaction of the ribosome with GTP-bound translation factors. The protein is Large ribosomal subunit protein uL10 of Thermococcus gammatolerans (strain DSM 15229 / JCM 11827 / EJ3).